Reading from the N-terminus, the 311-residue chain is UDP-N-acetylenolpyruvoylglucosamine reductase (311 aa).

The FAD-binding PCMH-type domain occupies 29 to 191 (IGGKADIVLK…LSARLKLKPI (163 aa)). Residue arginine 172 is part of the active site. Catalysis depends on serine 223, which acts as the Proton donor. Residue glutamate 299 is part of the active site.

This sequence belongs to the MurB family. It depends on FAD as a cofactor.

It is found in the cytoplasm. It catalyses the reaction UDP-N-acetyl-alpha-D-muramate + NADP(+) = UDP-N-acetyl-3-O-(1-carboxyvinyl)-alpha-D-glucosamine + NADPH + H(+). The protein operates within cell wall biogenesis; peptidoglycan biosynthesis. In terms of biological role, cell wall formation. The polypeptide is UDP-N-acetylenolpyruvoylglucosamine reductase (Chloroherpeton thalassium (strain ATCC 35110 / GB-78)).